The sequence spans 105 residues: MSSPPKEKTETRAGHLPAVKAGGMRIVQKHQSAIEVPDKKDDKDSTEYETVIPPKLPVVVSGVVTKGDKDFTPAAAQVAHQKPVPSAQKLPAGQHLNQHIHQPRK.

The segment at 75 to 105 (AAQVAHQKPVPSAQKLPAGQHLNQHIHQPRK) is disordered. Positions 95–105 (HLNQHIHQPRK) are enriched in polar residues.

Belongs to the DAP-DAPL1 family. Associates with ribosomes; inhibiting translation. Interacts with eiF5a (eif5a and eif5a2); inhibiting translation.

In terms of biological role, ribosome-binding protein involved in ribosome hibernation, a process during which ribosomes are stabilized in an inactive state and preserved from proteasomal degradation. Acts via its association with eiF5a (eif5a and eif5a2) at the polypeptide exit tunnel of the ribosome, preventing mRNA translation. Involved in ribosome hibernation in the mature egg by preventing mRNA translation, leading to ribosome inactivation. Ribosomes, which are produced in large quantities during oogenesis, are stored and translationally repressed in the egg and early embryo. Compared to dap1b, binds and inactivates ribosomes less efficiently. The chain is Death-associated protein 1 homolog from Danio rerio (Zebrafish).